Reading from the N-terminus, the 499-residue chain is GTPase Der (499 aa).

2 consecutive EngA-type G domains span residues 3–166 and 213–386; these read PVVA…LETL and IKFA…QSAT. GTP-binding positions include 9-16, 56-60, 118-121, 219-226, 266-270, and 331-334; these read GRPNVGKS, DTGGI, NKTD, DTAGV, and NKWD. Positions 387-471 constitute a KH-like domain; that stretch reads RRTSTAMLTR…PVRVEFQESA (85 aa).

Belongs to the TRAFAC class TrmE-Era-EngA-EngB-Septin-like GTPase superfamily. EngA (Der) GTPase family. In terms of assembly, associates with the 50S ribosomal subunit.

Functionally, GTPase that plays an essential role in the late steps of ribosome biogenesis. This Aeromonas hydrophila subsp. hydrophila (strain ATCC 7966 / DSM 30187 / BCRC 13018 / CCUG 14551 / JCM 1027 / KCTC 2358 / NCIMB 9240 / NCTC 8049) protein is GTPase Der.